Here is a 378-residue protein sequence, read N- to C-terminus: 4-hydroxy-3-methylbut-2-en-1-yl diphosphate synthase (flavodoxin) (378 aa).

[4Fe-4S] cluster is bound by residues cysteine 268, cysteine 271, cysteine 303, and glutamate 310. Residues 359–378 (AEREKEKEKEKEKEKETQEQ) form a disordered region.

It belongs to the IspG family. The cofactor is [4Fe-4S] cluster.

The catalysed reaction is (2E)-4-hydroxy-3-methylbut-2-enyl diphosphate + oxidized [flavodoxin] + H2O + 2 H(+) = 2-C-methyl-D-erythritol 2,4-cyclic diphosphate + reduced [flavodoxin]. It functions in the pathway isoprenoid biosynthesis; isopentenyl diphosphate biosynthesis via DXP pathway; isopentenyl diphosphate from 1-deoxy-D-xylulose 5-phosphate: step 5/6. Its function is as follows. Converts 2C-methyl-D-erythritol 2,4-cyclodiphosphate (ME-2,4cPP) into 1-hydroxy-2-methyl-2-(E)-butenyl 4-diphosphate. This Bacillus cereus (strain ZK / E33L) protein is 4-hydroxy-3-methylbut-2-en-1-yl diphosphate synthase (flavodoxin).